The primary structure comprises 448 residues: Methionine aminopeptidase 2-1 (448 aa).

Residues 1–90 (MAAQASEKLE…PPRVPVSSLF (90 aa)) form a disordered region. Residues 22 to 33 (AAGPAKAGQADA) show a composition bias toward low complexity. The span at 34–46 (GEVEDESDDDADD) shows a compositional bias: acidic residues. The span at 47 to 58 (AGAAADGAANGA) shows a compositional bias: low complexity. Basic residues predominate over residues 59–74 (AKKKKKRKSKKKKKGG). The segment covering 75-88 (AKVQSSPPRVPVSS) has biased composition (low complexity). His198 provides a ligand contact to substrate. Positions 218, 229, and 301 each coordinate a divalent metal cation. Residue His309 coordinates substrate. 2 residues coordinate a divalent metal cation: Glu334 and Glu429.

Belongs to the peptidase M24A family. Methionine aminopeptidase eukaryotic type 2 subfamily. Co(2+) is required as a cofactor. It depends on Zn(2+) as a cofactor. Mn(2+) serves as cofactor. The cofactor is Fe(2+).

It is found in the cytoplasm. The catalysed reaction is Release of N-terminal amino acids, preferentially methionine, from peptides and arylamides.. Its function is as follows. Cotranslationally removes the N-terminal methionine from nascent proteins. The N-terminal methionine is often cleaved when the second residue in the primary sequence is small and uncharged (Met-Ala-, Cys, Gly, Pro, Ser, Thr, or Val). In Emericella nidulans (strain FGSC A4 / ATCC 38163 / CBS 112.46 / NRRL 194 / M139) (Aspergillus nidulans), this protein is Methionine aminopeptidase 2-1.